Reading from the N-terminus, the 59-residue chain is Large ribosomal subunit protein uL30 (59 aa).

Belongs to the universal ribosomal protein uL30 family. In terms of assembly, part of the 50S ribosomal subunit.

The polypeptide is Large ribosomal subunit protein uL30 (Haemophilus influenzae (strain 86-028NP)).